Reading from the N-terminus, the 201-residue chain is NAD(P)H dehydrogenase (quinone) (201 aa).

The 189-residue stretch at 4-192 (VLVLYYSSYG…TIARFQGQHI (189 aa)) folds into the Flavodoxin-like domain. Residues 10-15 (SSYGHV) and 80-82 (TRF) contribute to the FMN site. NAD(+) is bound at residue Y12. Position 100 (W100) interacts with substrate. FMN is bound by residues 115 to 121 (STASQHG) and H136.

It belongs to the WrbA family. Requires FMN as cofactor.

It catalyses the reaction a quinone + NADH + H(+) = a quinol + NAD(+). The catalysed reaction is a quinone + NADPH + H(+) = a quinol + NADP(+). This Chromohalobacter salexigens (strain ATCC BAA-138 / DSM 3043 / CIP 106854 / NCIMB 13768 / 1H11) protein is NAD(P)H dehydrogenase (quinone).